Here is a 246-residue protein sequence, read N- to C-terminus: MNMLLLFLHEVINGERVTLTACSECVCPLQTSSSDDEYKCYCADTYSDCPGFCKKCKAEFGKYICLDLISPNDCVKPVSSSEAKQKMIKGERVTLTACSECVCPLRTSSSDEEYKCYCTDTYSDCPGFCKKCKAEFGKYICLDLISPNDCVKPVSSLEAKQNMIKEERVTLTACSECVCPLRTSSSDEEYKCYCTDTYSDCPGFCKTCKAEFGKYICLDLISPNDCVKPVSSWEARQKIKLLQGRE.

Residues 1-19 (MNMLLLFLHEVINGERVTL) form the signal peptide. 5 disulfides stabilise this stretch: Cys-22–Cys-42, Cys-25–Cys-74, Cys-27–Cys-40, Cys-49–Cys-56, and Cys-53–Cys-65. The propeptide occupies 31–35 (TSSSD). Propeptides lie at residues 77–95 (PVSS…RVTL) and 107–111 (TSSSD). 5 disulfide bridges follow: Cys-98-Cys-118, Cys-101-Cys-150, Cys-103-Cys-116, Cys-125-Cys-132, and Cys-129-Cys-141. 2 propeptides span residues 153-171 (PVSS…RVTL) and 183-187 (TSSSD). Intrachain disulfides connect Cys-174/Cys-194, Cys-177/Cys-226, Cys-179/Cys-192, Cys-201/Cys-208, and Cys-205/Cys-217. Positions 229–246 (PVSSWEARQKIKLLQGRE) are excised as a propeptide.

The protein belongs to the protease inhibitor I67 family. In terms of assembly, each inhibitor is composed of two chains, designated A and B linked by three disulfide bonds.

Its function is as follows. Weak inhibitor of cysteine proteinases. The chain is Bromelain inhibitor from Ananas comosus (Pineapple).